The sequence spans 84 residues: Cytochrome b559 subunit alpha (84 aa).

A helical transmembrane segment spans residues I22–F36. Residue H24 coordinates heme.

The protein belongs to the PsbE/PsbF family. In terms of assembly, heterodimer of an alpha subunit and a beta subunit. PSII is composed of 1 copy each of membrane proteins PsbA, PsbB, PsbC, PsbD, PsbE, PsbF, PsbH, PsbI, PsbJ, PsbK, PsbL, PsbM, PsbT, PsbX, PsbY, PsbZ, Psb30/Ycf12, at least 3 peripheral proteins of the oxygen-evolving complex and a large number of cofactors. It forms dimeric complexes. Heme b is required as a cofactor.

Its subcellular location is the plastid. It is found in the chloroplast thylakoid membrane. In terms of biological role, this b-type cytochrome is tightly associated with the reaction center of photosystem II (PSII). PSII is a light-driven water:plastoquinone oxidoreductase that uses light energy to abstract electrons from H(2)O, generating O(2) and a proton gradient subsequently used for ATP formation. It consists of a core antenna complex that captures photons, and an electron transfer chain that converts photonic excitation into a charge separation. This is Cytochrome b559 subunit alpha from Emiliania huxleyi (Coccolithophore).